Reading from the N-terminus, the 371-residue chain is DNA-directed RNA polymerase subunit alpha (371 aa).

Positions 1–248 (MSVKYGKFEM…KHFEVFNQFN (248 aa)) are alpha N-terminal domain (alpha-NTD). An alpha C-terminal domain (alpha-CTD) region spans residues 264–371 (DQDELMDKLS…KELVKHEDAK (108 aa)).

The protein belongs to the RNA polymerase alpha chain family. As to quaternary structure, homodimer. The RNAP catalytic core consists of 2 alpha, 1 beta, 1 beta' and 1 omega subunit. When a sigma factor is associated with the core the holoenzyme is formed, which can initiate transcription.

The catalysed reaction is RNA(n) + a ribonucleoside 5'-triphosphate = RNA(n+1) + diphosphate. Its function is as follows. DNA-dependent RNA polymerase catalyzes the transcription of DNA into RNA using the four ribonucleoside triphosphates as substrates. The chain is DNA-directed RNA polymerase subunit alpha from Protochlamydia amoebophila (strain UWE25).